A 425-amino-acid polypeptide reads, in one-letter code: Enolase (425 aa).

Gln-162 contacts (2R)-2-phosphoglycerate. The active-site Proton donor is the Glu-204. Residues Asp-241, Glu-282, and Asp-309 each contribute to the Mg(2+) site. The (2R)-2-phosphoglycerate site is built by Lys-334, Arg-363, Ser-364, and Lys-385. Lys-334 serves as the catalytic Proton acceptor.

This sequence belongs to the enolase family. Requires Mg(2+) as cofactor.

It is found in the cytoplasm. The protein resides in the secreted. Its subcellular location is the cell surface. It catalyses the reaction (2R)-2-phosphoglycerate = phosphoenolpyruvate + H2O. It participates in carbohydrate degradation; glycolysis; pyruvate from D-glyceraldehyde 3-phosphate: step 4/5. In terms of biological role, catalyzes the reversible conversion of 2-phosphoglycerate (2-PG) into phosphoenolpyruvate (PEP). It is essential for the degradation of carbohydrates via glycolysis. This is Enolase from Corynebacterium diphtheriae (strain ATCC 700971 / NCTC 13129 / Biotype gravis).